Reading from the N-terminus, the 96-residue chain is MKLRPLHDRVIVKRVENETKTASGIVIPDSAAEKPDQGEVLAVGPGKKNDKGEISPMAVKVGDRVLFGKYSGQTVKVAGDELLVMKEDDLFAVVEK.

This sequence belongs to the GroES chaperonin family. In terms of assembly, heptamer of 7 subunits arranged in a ring. Interacts with the chaperonin GroEL.

The protein resides in the cytoplasm. Functionally, together with the chaperonin GroEL, plays an essential role in assisting protein folding. The GroEL-GroES system forms a nano-cage that allows encapsulation of the non-native substrate proteins and provides a physical environment optimized to promote and accelerate protein folding. GroES binds to the apical surface of the GroEL ring, thereby capping the opening of the GroEL channel. The sequence is that of Co-chaperonin GroES from Albidiferax ferrireducens (strain ATCC BAA-621 / DSM 15236 / T118) (Rhodoferax ferrireducens).